Reading from the N-terminus, the 278-residue chain is Adenylate kinase (278 aa).

Position 50–55 (50–55 (GAGKGT)) interacts with ATP. Positions 70–99 (ATGDMLRAQVAKGTALGKQAKKIMNEGGLV) are NMP. AMP-binding positions include Thr71, Arg76, 97–99 (GLV), 126–129 (GFPR), and Gln133. Positions 167–204 (GRLVHPASGRSYHRIFNPPKDDMKDDITGEPLVQRSDD) are LID. ATP-binding positions include Arg168 and 177 to 178 (SY). Residues Arg201 and Arg212 each contribute to the AMP site. Position 240 (Gln240) interacts with ATP.

The protein belongs to the adenylate kinase family. AK2 subfamily. In terms of assembly, monomer.

It localises to the cytoplasm. It is found in the cytosol. The protein localises to the mitochondrion intermembrane space. The enzyme catalyses AMP + ATP = 2 ADP. Functionally, catalyzes the reversible transfer of the terminal phosphate group between ATP and AMP. Plays an important role in cellular energy homeostasis and in adenine nucleotide metabolism. Adenylate kinase activity is critical for regulation of the phosphate utilization and the AMP de novo biosynthesis pathways. The sequence is that of Adenylate kinase (adk-1) from Neurospora crassa (strain ATCC 24698 / 74-OR23-1A / CBS 708.71 / DSM 1257 / FGSC 987).